The primary structure comprises 61 residues: Short neurotoxin 1 (61 aa).

Polar residues predominate over residues 1-16 (LECHNQQSSQPPTTKS). The tract at residues 1–20 (LECHNQQSSQPPTTKSCPGD) is disordered. Disulfide bonds link Cys3–Cys23, Cys17–Cys40, Cys42–Cys53, and Cys54–Cys59.

This sequence belongs to the three-finger toxin family. Short-chain subfamily. Type I alpha-neurotoxin sub-subfamily. Expressed by the venom gland.

Its subcellular location is the secreted. Its function is as follows. Binds to muscle nicotinic acetylcholine receptor (nAChR) and inhibit acetylcholine from binding to the receptor, thereby impairing neuromuscular transmission. The protein is Short neurotoxin 1 of Hemachatus haemachatus (Rinkhals).